We begin with the raw amino-acid sequence, 259 residues long: UPF0246 protein PP_1289 (259 aa).

Belongs to the UPF0246 family.

This is UPF0246 protein PP_1289 from Pseudomonas putida (strain ATCC 47054 / DSM 6125 / CFBP 8728 / NCIMB 11950 / KT2440).